The primary structure comprises 601 residues: Glutathione-regulated potassium-efflux system protein KefB (601 aa).

13 consecutive transmembrane segments (helical) span residues alanine 4–alanine 24, isoleucine 29–phenylalanine 49, glutamate 55–leucine 75, isoleucine 87–methionine 107, phenylalanine 111–alanine 131, valine 152–glycine 172, histidine 177–glycine 197, phenylalanine 207–serine 227, leucine 230–leucine 250, alanine 262–leucine 282, leucine 284–isoleucine 304, methionine 324–alanine 344, and alanine 356–isoleucine 376. Positions lysine 400 to threonine 519 constitute an RCK N-terminal domain.

Belongs to the monovalent cation:proton antiporter 2 (CPA2) transporter (TC 2.A.37) family. KefB subfamily. Interacts with the regulatory subunit KefG.

The protein resides in the cell inner membrane. In terms of biological role, pore-forming subunit of a potassium efflux system that confers protection against electrophiles. Catalyzes K(+)/H(+) antiport. The chain is Glutathione-regulated potassium-efflux system protein KefB from Salmonella heidelberg (strain SL476).